Consider the following 219-residue polypeptide: Guanylate kinase (219 aa).

A Guanylate kinase-like domain is found at 15 to 194; that stretch reads GLMFVLSSPS…AFESVKAILR (180 aa). Residue 22–29 participates in ATP binding; the sequence is SPSGAGKT.

This sequence belongs to the guanylate kinase family.

It localises to the cytoplasm. The enzyme catalyses GMP + ATP = GDP + ADP. Essential for recycling GMP and indirectly, cGMP. The polypeptide is Guanylate kinase (Rhodopseudomonas palustris (strain BisB5)).